Here is a 325-residue protein sequence, read N- to C-terminus: ATP phosphoribosyltransferase (325 aa).

The protein belongs to the ATP phosphoribosyltransferase family. Long subfamily. Mg(2+) serves as cofactor.

The protein localises to the cytoplasm. The enzyme catalyses 1-(5-phospho-beta-D-ribosyl)-ATP + diphosphate = 5-phospho-alpha-D-ribose 1-diphosphate + ATP. It participates in amino-acid biosynthesis; L-histidine biosynthesis; L-histidine from 5-phospho-alpha-D-ribose 1-diphosphate: step 1/9. Its activity is regulated as follows. Feedback inhibited by histidine. Its function is as follows. Catalyzes the condensation of ATP and 5-phosphoribose 1-diphosphate to form N'-(5'-phosphoribosyl)-ATP (PR-ATP). Has a crucial role in the pathway because the rate of histidine biosynthesis seems to be controlled primarily by regulation of HisG enzymatic activity. The polypeptide is ATP phosphoribosyltransferase (Bradyrhizobium sp. (strain ORS 278)).